The primary structure comprises 489 residues: Glycogen synthase (489 aa).

Arg-20 contacts ADP-alpha-D-glucose.

It belongs to the glycosyltransferase 1 family. Bacterial/plant glycogen synthase subfamily.

The catalysed reaction is [(1-&gt;4)-alpha-D-glucosyl](n) + ADP-alpha-D-glucose = [(1-&gt;4)-alpha-D-glucosyl](n+1) + ADP + H(+). It participates in glycan biosynthesis; glycogen biosynthesis. Functionally, synthesizes alpha-1,4-glucan chains using ADP-glucose. In Chlorobium phaeovibrioides (strain DSM 265 / 1930) (Prosthecochloris vibrioformis (strain DSM 265)), this protein is Glycogen synthase.